Here is a 561-residue protein sequence, read N- to C-terminus: Proline--tRNA ligase (561 aa).

It belongs to the class-II aminoacyl-tRNA synthetase family. ProS type 1 subfamily. As to quaternary structure, homodimer.

Its subcellular location is the cytoplasm. It carries out the reaction tRNA(Pro) + L-proline + ATP = L-prolyl-tRNA(Pro) + AMP + diphosphate. Catalyzes the attachment of proline to tRNA(Pro) in a two-step reaction: proline is first activated by ATP to form Pro-AMP and then transferred to the acceptor end of tRNA(Pro). As ProRS can inadvertently accommodate and process non-cognate amino acids such as alanine and cysteine, to avoid such errors it has two additional distinct editing activities against alanine. One activity is designated as 'pretransfer' editing and involves the tRNA(Pro)-independent hydrolysis of activated Ala-AMP. The other activity is designated 'posttransfer' editing and involves deacylation of mischarged Ala-tRNA(Pro). The misacylated Cys-tRNA(Pro) is not edited by ProRS. The sequence is that of Proline--tRNA ligase from Wigglesworthia glossinidia brevipalpis.